A 432-amino-acid polypeptide reads, in one-letter code: MTAQPEIHLMAGGQDWDEIVTAAGQATDERIVVNMGPQHPSTHGVLRLILEIEGETVTDVRCGIGYLHTGIEKNLEYRTWTQGVTFVTRMDYLSPFFNETAYCLGVEQLLGIADEIPERANVIRVLMMELNRISSHLVALATGGMELGAMTAMFLGFREREMILKVFEAITGLRMNHAYVRPGGLAQDLPDGAEQEVRDLLEILPGRLRDMENLLNENYIWKARTQGVGYLDLTGCMALGITGPVLRATGLAHDLRRAQPYCGYENYDFDVVTHQDCDSYGRYLIRVKEMHESIKIAQQCVDRLRPGPVMVDDKKIAWPADLASGPDGLGNSPKHIAKIMGTSMEGLIHHFKLVTEGVRVPAGQVYVAIESPRGELGVHMVSDGGTRPYRVHFRDPSFTNLQSVAAMCEGAMVADLIAAVASIDPVMGGVDR.

The protein belongs to the complex I 49 kDa subunit family. NDH-1 is composed of 14 different subunits. Subunits NuoB, C, D, E, F, and G constitute the peripheral sector of the complex.

The protein localises to the cell membrane. It catalyses the reaction a quinone + NADH + 5 H(+)(in) = a quinol + NAD(+) + 4 H(+)(out). In terms of biological role, NDH-1 shuttles electrons from NADH, via FMN and iron-sulfur (Fe-S) centers, to quinones in the respiratory chain. The immediate electron acceptor for the enzyme in this species is believed to be a menaquinone. Couples the redox reaction to proton translocation (for every two electrons transferred, four hydrogen ions are translocated across the cytoplasmic membrane), and thus conserves the redox energy in a proton gradient. The polypeptide is NADH-quinone oxidoreductase subunit D (Mycobacteroides abscessus (strain ATCC 19977 / DSM 44196 / CCUG 20993 / CIP 104536 / JCM 13569 / NCTC 13031 / TMC 1543 / L948) (Mycobacterium abscessus)).